Consider the following 157-residue polypeptide: Small ribosomal subunit protein uS7 (157 aa).

It belongs to the universal ribosomal protein uS7 family. Part of the 30S ribosomal subunit. Contacts proteins S9 and S11.

Its function is as follows. One of the primary rRNA binding proteins, it binds directly to 16S rRNA where it nucleates assembly of the head domain of the 30S subunit. Is located at the subunit interface close to the decoding center, probably blocks exit of the E-site tRNA. The chain is Small ribosomal subunit protein uS7 from Chlamydia caviae (strain ATCC VR-813 / DSM 19441 / 03DC25 / GPIC) (Chlamydophila caviae).